The following is a 56-amino-acid chain: Large ribosomal subunit protein bL32 (56 aa).

The protein belongs to the bacterial ribosomal protein bL32 family.

The protein is Large ribosomal subunit protein bL32 of Edwardsiella ictaluri (strain 93-146).